A 229-amino-acid chain; its full sequence is Protein N-lysine methyltransferase METTL21D (229 aa).

At A2 the chain carries N-acetylalanine. S8 is modified (phosphoserine). Residues W43, 75-77 (GSG), D96, W126, A143, and Y148 contribute to the S-adenosyl-L-methionine site.

This sequence belongs to the methyltransferase superfamily. METTL21 family. Interacts with ALKBH6. Interacts with ASPSCR1 and UBXN6; interaction with ASPSCR1, but not with UBXN6, enhances VCP methylation.

It is found in the cytoplasm. It carries out the reaction L-lysyl-[protein] + 3 S-adenosyl-L-methionine = N(6),N(6),N(6)-trimethyl-L-lysyl-[protein] + 3 S-adenosyl-L-homocysteine + 3 H(+). Protein N-lysine methyltransferase that specifically trimethylates 'Lys-315' of VCP/p97; this modification may decrease VCP ATPase activity. The polypeptide is Protein N-lysine methyltransferase METTL21D (VCPKMT) (Homo sapiens (Human)).